A 577-amino-acid chain; its full sequence is Arginine--tRNA ligase (577 aa).

A 'HIGH' region motif is present at residues 122 to 132 (PNVAKEMHVGH).

It belongs to the class-I aminoacyl-tRNA synthetase family. Monomer.

It is found in the cytoplasm. The catalysed reaction is tRNA(Arg) + L-arginine + ATP = L-arginyl-tRNA(Arg) + AMP + diphosphate. This Haemophilus influenzae (strain 86-028NP) protein is Arginine--tRNA ligase.